Consider the following 120-residue polypeptide: Large ribosomal subunit protein bL20 (120 aa).

The protein belongs to the bacterial ribosomal protein bL20 family.

Binds directly to 23S ribosomal RNA and is necessary for the in vitro assembly process of the 50S ribosomal subunit. It is not involved in the protein synthesizing functions of that subunit. In Baumannia cicadellinicola subsp. Homalodisca coagulata, this protein is Large ribosomal subunit protein bL20.